Here is a 413-residue protein sequence, read N- to C-terminus: Putative zinc finger protein B0310.2 (413 aa).

Disordered regions lie at residues 130–151 and 259–290; these read PIFS…KRSL and VESD…TGPM. Residues 270–281 show a composition bias toward polar residues; the sequence is PSPSTGDITENE. C2H2-type zinc fingers lie at residues 306–330 and 336–358; these read FICM…MFIH and HTCP…KKTH.

It localises to the nucleus. In Caenorhabditis elegans, this protein is Putative zinc finger protein B0310.2.